A 104-amino-acid polypeptide reads, in one-letter code: Small ribosomal subunit protein bS6 (104 aa).

It belongs to the bacterial ribosomal protein bS6 family.

Binds together with bS18 to 16S ribosomal RNA. This Elusimicrobium minutum (strain Pei191) protein is Small ribosomal subunit protein bS6.